Here is a 167-residue protein sequence, read N- to C-terminus: MNVNEIIKGPILTEKSYQLMSSGVYSFKVSPKTNRSETKKAVEYIFNVKVEKVNIFTVPKKEKKLGKSKGFTTKYKKALVKLMPGYTINLFEDESPQDQKDSETVSENTEEKAKIAKKKAELEAKNKEIAEKLAKKQAELAKKDSETNENQEKRIENQTENQENSAN.

The interval 1–118 (MNVNEIIKGP…TEEKAKIAKK (118 aa)) is large ribosomal subunit protein uL23. Disordered regions lie at residues 91–112 (FEDE…TEEK) and 136–167 (KQAE…NSAN). Basic and acidic residues-rich tracts occupy residues 97-112 (QDQK…TEEK) and 136-157 (KQAE…RIEN). Residues 119-167 (KAELEAKNKEIAEKLAKKQAELAKKDSETNENQEKRIENQTENQENSAN) form a unknown region. The segment covering 158-167 (QTENQENSAN) has biased composition (polar residues).

This sequence belongs to the universal ribosomal protein uL23 family. In terms of assembly, part of the 50S ribosomal subunit. Contacts protein L29, and trigger factor when it is bound to the ribosome.

In terms of biological role, one of the early assembly proteins it binds 23S rRNA. One of the proteins that surrounds the polypeptide exit tunnel on the outside of the ribosome. Forms the main docking site for trigger factor binding to the ribosome. This chain is Large ribosomal subunit protein uL23, found in Mesomycoplasma hyopneumoniae (strain J / ATCC 25934 / NCTC 10110) (Mycoplasma hyopneumoniae).